The primary structure comprises 232 residues: Small ribosomal subunit protein uS3 (232 aa).

The region spanning 39–107 (VRRFLEQRLK…PVHVNIEEVR (69 aa)) is the KH type-2 domain.

The protein belongs to the universal ribosomal protein uS3 family. In terms of assembly, part of the 30S ribosomal subunit. Forms a tight complex with proteins S10 and S14.

Functionally, binds the lower part of the 30S subunit head. Binds mRNA in the 70S ribosome, positioning it for translation. This Chromohalobacter salexigens (strain ATCC BAA-138 / DSM 3043 / CIP 106854 / NCIMB 13768 / 1H11) protein is Small ribosomal subunit protein uS3.